The chain runs to 263 residues: Transmembrane protein 176B (263 aa).

Transmembrane regions (helical) follow at residues 61–81, 89–109, 125–145, and 197–217; these read LGVT…CLYF, ASGC…GIVI, LLLA…KSLI, and LFLA…VVSV. The segment at 242–263 is disordered; sequence KKLLGGDSAPASPTKEKIPVTP. Residues S249 and S253 each carry the phosphoserine modification.

The protein belongs to the TMEM176 family. As to expression, expressed in spleen by a variety of myeloid cells including macrophages and dendritic cells (at protein level). Ubiquitously expressed with higher expression in lymphoid tissues.

It is found in the nucleus membrane. Required for the development of cerebellar granule cells. May play a role in the process of maturation of dendritic cells. This is Transmembrane protein 176B (Tmem176b) from Rattus norvegicus (Rat).